Reading from the N-terminus, the 597-residue chain is Spastin (597 aa).

Topologically, residues 1–20 (MPNNDILRPLAIPAKYVGSF) are cytoplasmic. The helical intramembrane region spans 21–37 (LVFLYNGLYFVFVVNLW). The Cytoplasmic portion of the chain corresponds to 38–597 (SRLFGKATKT…DWNRLYGSNA (560 aa)). The tract at residues 56-80 (RKLGKDMASRAPPRRGQSSEDNEDG) is disordered. One can recognise an MIT domain in the interval 91–168 (HHKQAYAYIA…ENTRERMDEL (78 aa)). The interval 193–289 (SARKTSSEPS…PAMMAKQSCV (97 aa)) is disordered. Residues 214–231 (SYKQSKSYKNSTTVTTKR) show a composition bias toward polar residues. Residues 232 to 252 (SQASPSFSSSSSSVNSTAGSS) show a composition bias toward low complexity.

It belongs to the AAA ATPase family. Spastin subfamily. Homohexamer. The homohexamer is stabilized by ATP-binding. The homohexamer may adopt a ring conformation through which microtubules pass prior to being severed. Interacts with microtubules.

Its subcellular location is the membrane. The protein resides in the cytoplasm. The protein localises to the cytoskeleton. It localises to the microtubule organizing center. It is found in the centrosome. The enzyme catalyses n ATP + n H2O + a microtubule = n ADP + n phosphate + (n+1) alpha/beta tubulin heterodimers.. ATP-dependent microtubule severing protein. Microtubule severing may promote reorganization of cellular microtubule arrays and the release of microtubules from the microtubule organizing center following nucleation. The sequence is that of Spastin from Nematostella vectensis (Starlet sea anemone).